The following is a 1405-amino-acid chain: Rho guanine nucleotide exchange factor 18 (1405 aa).

Disordered stretches follow at residues 1 to 47 (MGSE…EDGF), 92 to 115 (ETHRQEARRESSHTSCEGASALPQ), and 289 to 330 (PGKS…PGKR). 2 stretches are compositionally biased toward basic and acidic residues: residues 92–103 (ETHRQEARRESS) and 308–330 (RQKEKGKSPAHLKDKTQDLPGKR). The C2H2-type; degenerate zinc finger occupies 347 to 372 (SSCPLCGEPLLNSASLKEHPRTTLLS). Residues 485-682 (KRQDVLYELM…KDIISQVDAK (198 aa)) form the DH domain. Positions 723 to 825 (QLHLEGALCW…WMAHIRRAVE (103 aa)) constitute a PH domain. A disordered region spans residues 936 to 1016 (QVEEGSVSAG…PQAVEMPSTE (81 aa)). Thr-952 carries the post-translational modification Phosphothreonine. Position 961 is a phosphoserine (Ser-961). Positions 1084–1181 (FEKQREERAG…RERLELLRRF (98 aa)) form a coiled coil. Disordered regions lie at residues 1198 to 1242 (EAQP…VERP), 1274 to 1309 (RQTAVQQQIPTKLAASTKGGKEKGSKSRGSQRWESS), and 1328 to 1405 (ESAS…VIFF). Phosphoserine occurs at positions 1336 and 1338. Over residues 1355–1365 (FPAPSPAPAAT) the composition is skewed to pro residues. Residues 1375-1394 (TSLPPVSPASSLPTTPLATT) show a composition bias toward low complexity. Residues 1396–1405 (EVSKEDVIFF) show a composition bias toward basic and acidic residues.

Interacts with SEPT9; interaction may inhibit GEF activity. Interacts with Gbetagamma subunits GNB1 and GNG2. Interacts with EPB41L4B. Interacts with PATJ (via C-terminus).

It is found in the cytoplasm. Its subcellular location is the cytoskeleton. The protein localises to the cell membrane. The protein resides in the apical cell membrane. In terms of biological role, acts as a guanine nucleotide exchange factor (GEF) for RhoA GTPases. May play a role in actin cytoskeleton reorganization in different tissues since its activation induces formation of actin stress fibers. Also acts as a GEF for RAC1, inducing production of reactive oxygen species (ROS). Does not act as a GEF for CDC42. The G protein beta-gamma (Gbetagamma) subunits of heterotrimeric G proteins act as activators, explaining the integrated effects of LPA and other G-protein coupled receptor agonists on actin stress fiber formation, cell shape change and ROS production. Required for EPB41L4B-mediated regulation of the circumferential actomyosin belt in epithelial cells. This chain is Rho guanine nucleotide exchange factor 18 (Arhgef18), found in Mus musculus (Mouse).